A 523-amino-acid polypeptide reads, in one-letter code: MDKELAEKVKKRRTFAIISHPDAGKTTITEQMLLFGGVIRKAGTVKARKTGNFATSDWMEIEKKRGISVTSSVMQFEYKGKRINILDTPGHQDFSEDTYRTLMAVDAAVMVIDSAKGIEPQTKKLFKVVKKRGIPIFTFMNKLDRDGRPPLDLIAELEDLLGIEGVAMDWPIGSGQTLKGLYDVANNRVELYRKDGEDRFLPLNEDGTLPDSEPLSQDPQFQDTLDEIELVKEAGNKFDPEKIALGDQTPVFFGSALTNFGVETFLNSFVDLAPAPESHTVNGDEELSPEDPEFSGFVFKIQANMNPHHRDRIAFVRVGSGEFKRGLDVTLARTGKPIRLNNATEFMSSERVQVSDAVAGDIVGLYDTGNFQIGDSIYSGKRKIVYPPLPEFTPELFMRVTAKNVMKQKSFHKGMNQLVQEGAIQLYRNYQTDEYILGAVGQLQFEVFQFRMKNEYNSEVEMNSIGHRVARWIDPEQLDPRMSNSRNLLVKDRYGNPLFLFENEFAERFFHDKYPDVKLTEKL.

Residues 10–277 enclose the tr-type G domain; that stretch reads KKRRTFAIIS…SFVDLAPAPE (268 aa). Residues 19 to 26, 87 to 91, and 141 to 144 each bind GTP; these read SHPDAGKT, DTPGH, and NKLD.

It belongs to the TRAFAC class translation factor GTPase superfamily. Classic translation factor GTPase family. PrfC subfamily.

The protein localises to the cytoplasm. In terms of biological role, increases the formation of ribosomal termination complexes and stimulates activities of RF-1 and RF-2. It binds guanine nucleotides and has strong preference for UGA stop codons. It may interact directly with the ribosome. The stimulation of RF-1 and RF-2 is significantly reduced by GTP and GDP, but not by GMP. The chain is Peptide chain release factor 3 from Lactobacillus helveticus (strain DPC 4571).